The sequence spans 382 residues: MNVCSNTTKDPLTLMAMWGSMKGYNPEQGFSFEGPEKRLEVILRCTLETHVDGLRSLDDSVWSGVVGSLNAQIVSRESNEYINSYVLTESSLFVMKNRIILITCGTTTLLNSIPNILEAISAVRGELEWVSFMHKNYSFPWMQKGPHTSLADEFATLKQHFPTGKPYIFGPVDSDHYFLFCYDDIIRPCSSEDDTQLSMTMYGLDKEQTKHWFSDRFISTSAETAAIRAATHLDRVVDGTWTLHDLQFEPCGYSINAIRDEEYQTMHITPEDHCSFASYETNSRAANYSDRMKKVLGVFRPQRFTVIVFLDPESPVGKAYNEGKGIGVEPEYYPEYNLLHRTTNEFAPGYVAMKINYVRTAAVEETDTAVGGAEPGAEGGPD.

A substrate-binding site is contributed by F32. Catalysis depends on residues E33 and E36. Position 87 (L87) interacts with substrate. S90 functions as the Schiff-base intermediate with substrate; via pyruvic acid in the catalytic mechanism. S90 bears the Pyruvic acid (Ser); by autocatalysis mark. C104 (proton donor; for catalytic activity) is an active-site residue. F248 is a substrate binding site. Residues S254 and H267 each act as proton acceptor; for processing activity in the active site. A substrate-binding site is contributed by E271.

Belongs to the eukaryotic AdoMetDC family. In terms of assembly, heterotetramer of two alpha and two beta chains. Pyruvate is required as a cofactor. Post-translationally, is synthesized initially as an inactive proenzyme. Formation of the active enzyme involves a self-maturation process in which the active site pyruvoyl group is generated from an internal serine residue via an autocatalytic post-translational modification. Two non-identical subunits are generated from the proenzyme in this reaction, and the pyruvate is formed at the N-terminus of the alpha chain, which is derived from the carboxyl end of the proenzyme. The post-translation cleavage follows an unusual pathway, termed non-hydrolytic serinolysis, in which the side chain hydroxyl group of the serine supplies its oxygen atom to form the C-terminus of the beta chain, while the remainder of the serine residue undergoes an oxidative deamination to produce ammonia and the pyruvoyl group blocking the N-terminus of the alpha chain.

It carries out the reaction S-adenosyl-L-methionine + H(+) = S-adenosyl 3-(methylsulfanyl)propylamine + CO2. Its pathway is amine and polyamine biosynthesis; S-adenosylmethioninamine biosynthesis; S-adenosylmethioninamine from S-adenosyl-L-methionine: step 1/1. This Leishmania donovani protein is S-adenosylmethionine decarboxylase proenzyme.